The chain runs to 299 residues: Acetaldehyde dehydrogenase 6 (299 aa).

Cysteine 125 acts as the Acyl-thioester intermediate in catalysis. NAD(+) contacts are provided by residues 156–164 (GAGPGTRAN) and asparagine 275.

It belongs to the acetaldehyde dehydrogenase family.

It catalyses the reaction acetaldehyde + NAD(+) + CoA = acetyl-CoA + NADH + H(+). The chain is Acetaldehyde dehydrogenase 6 (hpdG) from Rhodococcus jostii (strain RHA1).